The following is a 610-amino-acid chain: Propanediol dehydratase-reactivating factor large subunit (610 aa).

11–13 (NSS) serves as a coordination point for ATP. Mg(2+) contacts are provided by T105, D166, and D183. ATP is bound by residues 459–462 (EEIK), 557–558 (GS), and R591.

This sequence belongs to the DdrA/PduG family. In terms of assembly, forms a heterotetramer PduG(2)/PduH(2). Requires Mg(2+) as cofactor.

Its subcellular location is the bacterial microcompartment. The enzyme catalyses ATP + H2O = ADP + phosphate + H(+). The protein operates within polyol metabolism; 1,2-propanediol degradation. In terms of biological role, large subunit of the propanediol dehydratase-reactivating factor (DDR), which reactivates suicidally inhibited adenosylcobalamin-dependent propanediol dehydratase (diol dehydratase, DDH) found in the bacterial microcompartment (BMC) dedicated to 1,2-propanediol (1,2-PD) degradation. Reactivates inactivated DDH in the presence of ATP, Mg(2+) and free adenosylcobalamin (AdoCbl), by mediating the exchange of the tightly bound damaged cofactor AdoCbl for a free intact one. This subunit contains the adenosine nucleotide binding site. The 1,2-PD-specific bacterial microcompartment (BMC) concentrates low levels of 1,2-PD catabolic enzymes, concentrates volatile reaction intermediates thus enhancing pathway flux and keeps the level of toxic, mutagenic propionaldehyde low. In Salmonella typhimurium (strain LT2 / SGSC1412 / ATCC 700720), this protein is Propanediol dehydratase-reactivating factor large subunit.